The following is a 720-amino-acid chain: Dedicator of cytokinesis protein 9 (720 aa).

In terms of domain architecture, DOCKER spans 186–638 (KSYASTPELR…LSDIIVPRIC (453 aa)). Positions 277-638 (DEEASMMEDV…LSDIIVPRIC (362 aa)) are interaction with CDC42.

Belongs to the DOCK family. As to quaternary structure, homodimer. Interacts preferentially with nucleotide-depleted CDC42.

Its subcellular location is the endomembrane system. Guanine nucleotide-exchange factor (GEF) that activates CDC42 by exchanging bound GDP for free GTP. Overexpression induces filopodia formation. The sequence is that of Dedicator of cytokinesis protein 9 (Dock9) from Rattus norvegicus (Rat).